A 439-amino-acid chain; its full sequence is Xaa-Pro dipeptidase (439 aa).

The Mn(2+) site is built by aspartate 244, aspartate 255, histidine 335, glutamate 380, and glutamate 419.

This sequence belongs to the peptidase M24B family. Bacterial-type prolidase subfamily. Mn(2+) is required as a cofactor.

The enzyme catalyses Xaa-L-Pro dipeptide + H2O = an L-alpha-amino acid + L-proline. Its function is as follows. Splits dipeptides with a prolyl residue in the C-terminal position. The protein is Xaa-Pro dipeptidase of Shewanella sp. (strain MR-4).